We begin with the raw amino-acid sequence, 362 residues long: 3-dehydroquinate synthase (362 aa).

NAD(+) contacts are provided by residues D71–K76, G105–D109, T129–T130, K142, K151, and C169–T172. The Zn(2+) site is built by E184, H248, and H265.

This sequence belongs to the sugar phosphate cyclases superfamily. Dehydroquinate synthase family. The cofactor is Co(2+). Requires Zn(2+) as cofactor. NAD(+) serves as cofactor.

The protein localises to the cytoplasm. It carries out the reaction 7-phospho-2-dehydro-3-deoxy-D-arabino-heptonate = 3-dehydroquinate + phosphate. The protein operates within metabolic intermediate biosynthesis; chorismate biosynthesis; chorismate from D-erythrose 4-phosphate and phosphoenolpyruvate: step 2/7. Catalyzes the conversion of 3-deoxy-D-arabino-heptulosonate 7-phosphate (DAHP) to dehydroquinate (DHQ). In Yersinia pseudotuberculosis serotype O:1b (strain IP 31758), this protein is 3-dehydroquinate synthase.